Reading from the N-terminus, the 104-residue chain is Large ribosomal subunit protein bL21 (104 aa).

It belongs to the bacterial ribosomal protein bL21 family. Part of the 50S ribosomal subunit. Contacts protein L20.

In terms of biological role, this protein binds to 23S rRNA in the presence of protein L20. The protein is Large ribosomal subunit protein bL21 of Desulfosudis oleivorans (strain DSM 6200 / JCM 39069 / Hxd3) (Desulfococcus oleovorans).